Reading from the N-terminus, the 206-residue chain is Small ribosomal subunit protein uS5 (206 aa).

Polar residues predominate over residues 1–15 (MTDTPTKQETQSNKD). The segment at 1-50 (MTDTPTKQETQSNKDNVPGAIPVEQKKNNRNDRKRNRRGDSKNLERDSDW) is disordered. The segment covering 38–50 (RGDSKNLERDSDW) has biased composition (basic and acidic residues). The region spanning 50-113 (WQERVVQIRR…SDGKKNLVRV (64 aa)) is the S5 DRBM domain.

This sequence belongs to the universal ribosomal protein uS5 family. As to quaternary structure, part of the 30S ribosomal subunit. Contacts proteins S4 and S8.

In terms of biological role, with S4 and S12 plays an important role in translational accuracy. Its function is as follows. Located at the back of the 30S subunit body where it stabilizes the conformation of the head with respect to the body. The sequence is that of Small ribosomal subunit protein uS5 from Prochlorococcus marinus (strain MIT 9215).